The following is a 505-amino-acid chain: Olfactomedin-4 (505 aa).

An N-terminal signal peptide occupies residues 1 to 18; that stretch reads MSYSLLFLLALQFCLGSA. N-linked (GlcNAc...) asparagine glycosylation is found at Asn-64 and Asn-128. A coiled-coil region spans residues 174–225; that stretch reads HIIDMLEVEIRNMTLLVEKLESLDQNNVLSIRRQILALKTKLKECEASKSDL. An Olfactomedin-like domain is found at 237 to 499; it reads SCSHGGVVNI…LLNYDLVFLQ (263 aa). Cys-238 and Cys-429 form a disulfide bridge.

In terms of assembly, homomultimer; disulfide-linked. Interacts with NDUFA13. Interacts with cell surface lectins (locutions ricinus communis agglutinin I, concanavalin A and wheat germ agglutinin) and cadherin. In terms of processing, N-glycosylated.

The protein localises to the secreted. It localises to the extracellular space. It is found in the mitochondrion. In terms of biological role, may promote proliferation of pancreatic cancer cells by favoring the transition from the S to G2/M phase. In myeloid leukemic cell lines, inhibits cell growth and induces cell differentiation and apoptosis. May play a role in the inhibition of EIF4EBP1 phosphorylation/deactivation. Facilitates cell adhesion, most probably through interaction with cell surface lectins and cadherin. The sequence is that of Olfactomedin-4 (Olfm4) from Mus musculus (Mouse).